A 462-amino-acid polypeptide reads, in one-letter code: GTPase Der (462 aa).

EngA-type G domains lie at 9–171 (KTIA…NLNQ) and 201–372 (IQVG…ECFS). GTP contacts are provided by residues 15–22 (GQPNVGKS), 62–66 (DTGGM), 123–126 (NKID), 207–214 (GRVNVGKS), 254–258 (DTAGI), and 318–321 (NKWD). The 85-residue stretch at 373–457 (KRIPTSLLNS…PLILNAKDKK (85 aa)) folds into the KH-like domain.

This sequence belongs to the TRAFAC class TrmE-Era-EngA-EngB-Septin-like GTPase superfamily. EngA (Der) GTPase family. In terms of assembly, associates with the 50S ribosomal subunit.

Its function is as follows. GTPase that plays an essential role in the late steps of ribosome biogenesis. The sequence is that of GTPase Der from Helicobacter pylori (strain P12).